Reading from the N-terminus, the 155-residue chain is Large ribosomal subunit protein eL24 (155 aa).

The disordered stretch occupies residues 92 to 155 (AKRNMKPEVR…KAAPRVGGKR (64 aa)). Residues 96–117 (MKPEVRKAQREQAIKQAKEQKK) show a composition bias toward basic and acidic residues. Positions 124–133 (KTTAPPTKGK) are enriched in low complexity.

Belongs to the eukaryotic ribosomal protein eL24 family.

This Plutella xylostella (Diamondback moth) protein is Large ribosomal subunit protein eL24 (RpL24).